A 91-amino-acid chain; its full sequence is LYR motif-containing protein 4 (91 aa).

Residues Arg6 and Lys44 each coordinate pantetheine 4'-phosphate. Lys47 is modified (N6-succinyllysine).

The protein belongs to the complex I LYR family. As to quaternary structure, homodimer. Component of the mitochondrial core iron-sulfur cluster (ISC) complex composed of NFS1, LYRM4, NDUFAB1, ISCU, FXN, and FDX2; this complex is a heterohexamer containing two copies of each monomer. Component of the cyteine desulfurase complex composed of NFS1, LYRM4 and NDUFAB1; this complex contributes to the stability and cysteine desulfurase activity of NFS1. Interacts with FXN; this interaction is nickel-dependent. Interacts with the cytoplasmic form of NFS1; the complex increases the stability of NFS1. Forms a complex with the cytoplasmic form of NFS1; this complex increases the stability and cysteine desulfurase activity of NFS1. Interacts with NFS1. Component of a complex composed of FXN, NFS1, LYRM4 and ISCU.

The protein localises to the mitochondrion. It is found in the nucleus. The protein operates within cofactor biosynthesis; iron-sulfur cluster biosynthesis. In terms of biological role, stabilizing factor, of the core iron-sulfur cluster (ISC) assembly complex, that regulates, in association with NDUFAB1, the stability and the cysteine desulfurase activity of NFS1 and participates in the [2Fe-2S] clusters assembly on the scaffolding protein ISCU. The core iron-sulfur cluster (ISC) assembly complex is involved in the de novo synthesis of a [2Fe-2S] cluster, the first step of the mitochondrial iron-sulfur protein biogenesis. This process is initiated by the cysteine desulfurase complex (NFS1:LYRM4:NDUFAB1) that produces persulfide which is delivered on the scaffold protein ISCU in a FXN-dependent manner. Then this complex is stabilized by FDX2 which provides reducing equivalents to accomplish the [2Fe-2S] cluster assembly. Finally, the [2Fe-2S] cluster is transferred from ISCU to chaperone proteins, including HSCB, HSPA9 and GLRX5. May also participates in the iron-sulfur protein biogenesis in the cytoplasm through its interaction with the cytoplasmic form of NFS1. The sequence is that of LYR motif-containing protein 4 from Mus musculus (Mouse).